Consider the following 143-residue polypeptide: Class II hydrophobin qid3 (143 aa).

Residues 1 to 17 (MKFLTVAAVFFTAVLAA) form the signal peptide. A compositionally biased stretch (pro residues) spans 20 to 37 (NYPPPPPPTYAPPPPTYT). Residues 20-67 (NYPPPPPPTYAPPPPTYTLPPNGNGGGNGNGNGNGNGGGNGNGNGNTN) are disordered. Repeat copies occupy residues 41–42 (NG), 43–44 (NG), 47–48 (NG), 49–50 (NG), 51–52 (NG), 53–54 (NG), 55–56 (NG), 59–60 (NG), 61–62 (NG), and 63–64 (NG). Residues 41–64 (NGNGGGNGNGNGNGNGGGNGNGNG) are 10 X 2 AA repeats of N-G. The span at 42-63 (GNGGGNGNGNGNGNGGGNGNGN) shows a compositional bias: gly residues. Cystine bridges form between Cys74-Cys124, Cys85-Cys97, and Cys125-Cys136.

This sequence belongs to the cerato-ulmin hydrophobin family. As to quaternary structure, homotetramer. Further self-assembles to form highly ordered films at water-air interfaces through intermolecular interactions.

The protein localises to the secreted. The protein resides in the cell wall. Aerial growth, conidiation, and dispersal of filamentous fungi in the environment rely upon a capability of their secreting small amphipathic proteins called hydrophobins (HPBs) with low sequence identity. Class I can self-assemble into an outermost layer of rodlet bundles on aerial cell surfaces, conferring cellular hydrophobicity that supports fungal growth, development and dispersal; whereas Class II form highly ordered films at water-air interfaces through intermolecular interactions but contribute nothing to the rodlet structure. Qid3 is a class II hydrophobin that might acts as a chitinase inhibitor at the cell surface that blocks the degradation of the chitin rings localized in the budding region of dividing cells. This chain is Class II hydrophobin qid3, found in Trichoderma harzianum (Hypocrea lixii).